Here is a 447-residue protein sequence, read N- to C-terminus: MVGWLIYRLHLDPLSRIPGPLLAKFVPICNIRMVLTGRMMFTFKELHDTYGPVVRIGPSELSFATHSAFDTIYGPYGDKNFSLYGSRKGLLGSLDKENRRKLRPLVATSLNELLAAKGEEYCHLAMDEQLASHHVGQTEATPVSLSTLNNRYLWQFASMAANGNCGDETDRGTSFTNIFMGLSFMALTQVIAICFIFRQPVHPGEVNYDRDESPFPDNLHSRLQQAASRTSLHVPEYLLQINCFVLRFSIYGTADNMLNALFYFLLRNPQCLKRLEEEVSCVGATVNELSDDRLAKLPYLNACINETFRIAPAFNGGILQRVSCGATVDGVYVPPGVAVSVDHYTLGHDPQYWVKPDVFNPERWIDPDCKDNFKASRPFLIGARQCPGRQMAYQMFRVCVAKLVYLYTFELLNKDFDIERDTFSSYHWTGVKLDVTMKPRTPGVLGY.

Heme is bound at residue Cys386.

Belongs to the cytochrome P450 family. Requires heme as cofactor.

It carries out the reaction 2 fonsecin B + NADPH + O2 + H(+) = aurasperone B + NADP(+) + 2 H2O. The catalysed reaction is 2 rubrofusarin B + NADPH + O2 + H(+) = aurasperone A + NADP(+) + 2 H2O. The protein operates within secondary metabolite biosynthesis. In terms of biological role, cytochrome P450 monooxygenase; part of the gene cluster that mediates the biosynthesis of aurasperone B, a dimeric gamma-naphthopyrone. The first step in the biosynthesis of aurasperone B is the production of gamma-naphthopyrone precursor YWA1 by the non-reducing polyketide synthase albA, via condensation of one acetyl-CoA starter unit with 6 malonyl-CoA units. YWA1 is then methylated by aunE at position C-6 to yield foncesin which is further methylated at position C-8 by aunD to produce fonsecin B. A key enzyme in the biosynthetic pathway is the cytochrome P450 monooxygenase aunB which catalyzes the oxidative dimerization of fonsecin B to aurasperone B. AunB also catalyzes the oxidative dimerization of rubrofusarin B into aurasperone A. This is Cytochrome P450 monooxygenase aunB from Aspergillus niger (strain ATCC MYA-4892 / CBS 513.88 / FGSC A1513).